Reading from the N-terminus, the 117-residue chain is UPF0344 protein GTNG_0604 (117 aa).

4 helical membrane-spanning segments follow: residues 1–21, 39–59, 61–81, and 97–117; these read MTHAHITSWFIMIILFLIAVS, LFYIITIITGLLLLHSIASIS, LYWLKALAGLWVIGAMEMVLV, and VIALVVTLFLGLLLPLGFDLF.

The protein belongs to the UPF0344 family.

The protein resides in the cell membrane. The protein is UPF0344 protein GTNG_0604 of Geobacillus thermodenitrificans (strain NG80-2).